The chain runs to 115 residues: Phosphoribosyl-AMP cyclohydrolase (115 aa).

Position 80 (Asp80) interacts with Mg(2+). A Zn(2+)-binding site is contributed by Cys81. Residues Asp82 and Asp84 each coordinate Mg(2+). Positions 97 and 104 each coordinate Zn(2+).

This sequence belongs to the PRA-CH family. As to quaternary structure, homodimer. It depends on Mg(2+) as a cofactor. The cofactor is Zn(2+).

The protein resides in the cytoplasm. It catalyses the reaction 1-(5-phospho-beta-D-ribosyl)-5'-AMP + H2O = 1-(5-phospho-beta-D-ribosyl)-5-[(5-phospho-beta-D-ribosylamino)methylideneamino]imidazole-4-carboxamide. It functions in the pathway amino-acid biosynthesis; L-histidine biosynthesis; L-histidine from 5-phospho-alpha-D-ribose 1-diphosphate: step 3/9. Catalyzes the hydrolysis of the adenine ring of phosphoribosyl-AMP. This chain is Phosphoribosyl-AMP cyclohydrolase, found in Mycolicibacterium paratuberculosis (strain ATCC BAA-968 / K-10) (Mycobacterium paratuberculosis).